A 192-amino-acid polypeptide reads, in one-letter code: Large ribosomal subunit protein uL18 (192 aa).

The protein belongs to the universal ribosomal protein uL18 family. As to quaternary structure, part of the 50S ribosomal subunit. Contacts the 5S and 23S rRNAs.

Its function is as follows. This is one of the proteins that bind and probably mediate the attachment of the 5S RNA into the large ribosomal subunit, where it forms part of the central protuberance. This is Large ribosomal subunit protein uL18 from Methanothermobacter thermautotrophicus (strain ATCC 29096 / DSM 1053 / JCM 10044 / NBRC 100330 / Delta H) (Methanobacterium thermoautotrophicum).